The sequence spans 148 residues: Cytochrome c-type biogenesis protein CcmE (148 aa).

Topologically, residues 1 to 7 (MKPRSKR) are cytoplasmic. Residues 8–28 (LLLVAGAVALLVGAVALVLNA) form a helical; Signal-anchor for type II membrane protein membrane-spanning segment. Residues 29–148 (FQQNLVFFHT…AQKAAQTVQQ (120 aa)) lie on the Periplasmic side of the membrane. Residues histidine 123 and tyrosine 127 each contribute to the heme site.

This sequence belongs to the CcmE/CycJ family.

It is found in the cell inner membrane. Functionally, heme chaperone required for the biogenesis of c-type cytochromes. Transiently binds heme delivered by CcmC and transfers the heme to apo-cytochromes in a process facilitated by CcmF and CcmH. The sequence is that of Cytochrome c-type biogenesis protein CcmE from Aromatoleum aromaticum (strain DSM 19018 / LMG 30748 / EbN1) (Azoarcus sp. (strain EbN1)).